A 199-amino-acid chain; its full sequence is MKLTKISEAKLPTSFGEFLMIVFEESKTDKNHIALVYGDIKDTNNSVLSRIHSECLTGDALFSIRCDCGFQLKSALMEIVKEGSGILIYHRQEGRNIGLSNKIRAYALQDIGLDTVEANHHLGFSADERDFSVCIDIFNTLNIKKIKLLTNNPSKVTVLNNAGIQITERISLIVGRNAKNSKYLNTKAHKMGHFLPIEY.

Residue R50–E54 participates in GTP binding. 3 residues coordinate Zn(2+): C55, C66, and C68. Residues Q71, E93–R95, and T115 contribute to the GTP site. D127 acts as the Proton acceptor in catalysis. R129 (nucleophile) is an active-site residue. Residues T150 and K155 each contribute to the GTP site.

Belongs to the GTP cyclohydrolase II family. As to quaternary structure, homodimer. The cofactor is Zn(2+).

The catalysed reaction is GTP + 4 H2O = 2,5-diamino-6-hydroxy-4-(5-phosphoribosylamino)-pyrimidine + formate + 2 phosphate + 3 H(+). Its pathway is cofactor biosynthesis; riboflavin biosynthesis; 5-amino-6-(D-ribitylamino)uracil from GTP: step 1/4. In terms of biological role, catalyzes the conversion of GTP to 2,5-diamino-6-ribosylamino-4(3H)-pyrimidinone 5'-phosphate (DARP), formate and pyrophosphate. This Buchnera aphidicola subsp. Baizongia pistaciae (strain Bp) protein is GTP cyclohydrolase-2.